A 476-amino-acid chain; its full sequence is UDP-N-acetylmuramoylalanine--D-glutamate ligase (476 aa).

An ATP-binding site is contributed by 122–128 (GSNAKST).

It belongs to the MurCDEF family.

It is found in the cytoplasm. It carries out the reaction UDP-N-acetyl-alpha-D-muramoyl-L-alanine + D-glutamate + ATP = UDP-N-acetyl-alpha-D-muramoyl-L-alanyl-D-glutamate + ADP + phosphate + H(+). The protein operates within cell wall biogenesis; peptidoglycan biosynthesis. In terms of biological role, cell wall formation. Catalyzes the addition of glutamate to the nucleotide precursor UDP-N-acetylmuramoyl-L-alanine (UMA). This chain is UDP-N-acetylmuramoylalanine--D-glutamate ligase, found in Psychrobacter arcticus (strain DSM 17307 / VKM B-2377 / 273-4).